The chain runs to 925 residues: Antiviral innate immune response receptor RIG-I (925 aa).

CARD domains follow at residues 1 to 87 (MTTE…GLYE) and 92 to 172 (WDFK…KTLK). Serine 8 bears the (Microbial infection) Phosphoserine mark. At serine 8 the chain carries Phosphoserine. Residues lysine 48, lysine 96, lysine 154, and lysine 164 each participate in a glycyl lysine isopeptide (Lys-Gly) (interchain with G-Cter in ubiquitin) cross-link. Position 170 is a phosphothreonine (threonine 170). Residues lysine 172, lysine 181, lysine 193, and lysine 203 each participate in a glycyl lysine isopeptide (Lys-Gly) (interchain with G-Cter in ubiquitin) cross-link. Positions 218-925 (ECQNLSENSC…IPFDPAEMSK (708 aa)) are interaction with ZC3HAV1. The Helicase ATP-binding domain occupies 251 to 430 (ALPAMKGKNT…DEALDYICKL (180 aa)). ATP is bound at residue 264-271 (APTGCGKT). The short motif at 372-375 (DECH) is the DECH box element. Asparagine 495 and asparagine 549 each carry (Microbial infection) Deamidated asparagine; by herpes simplex virus 1/HHV-1 UL37. In terms of domain architecture, Helicase C-terminal spans 610–776 (KLEDLCFILQ…RLQTWDEAVF (167 aa)). Residues 735 to 925 (GSKCFLLTSN…IPFDPAEMSK (191 aa)) form a mediates interaction with RNF135 region. Position 770 is a phosphothreonine; by CK2 (threonine 770). The RLR CTR domain maps to 794 to 925 (QEKPKPVPDK…IPFDPAEMSK (132 aa)). A Zn(2+)-binding site is contributed by cysteine 810. Lysine 812 participates in a covalent cross-link: Glycyl lysine isopeptide (Lys-Gly) (interchain with G-Cter in ubiquitin). Cysteine 813 lines the Zn(2+) pocket. A phosphoserine; by CK2 mark is found at serine 854 and serine 855. At lysine 858 the chain carries N6-acetyllysine. Positions 864 and 869 each coordinate Zn(2+). The residue at position 909 (lysine 909) is an N6-acetyllysine.

The protein belongs to the helicase family. RLR subfamily. In terms of assembly, monomer; maintained as a monomer in an autoinhibited state. Upon binding of viral RNAs and conformational shift, homooligomerizes and forms filaments on these molecules. Interacts (via tandem CARD domain) with MAVS/IPS1 promoting its filamentation. Interacts with DHX58/LGP2, IKBKE, TBK1 and STING1. Interacts (via CARD domain) with TRIM25 (via SPRY domain). Interacts (double-stranded RNA-bound oligomeric form) with RNF135 (homodimer); involved in RNA length-dependent activation of the RIG-I signaling pathway. Interacts with CYLD. Interacts with NLRC5; blocks the interaction of MAVS/IPS1 to RIGI. Interacts with SRC. Interacts with DDX60. Interacts with isoform 2 of ZC3HAV1 (via zinc-fingers) in an RNA-dependent manner. Interacts (via tandem CARD domain) with SEC14L1; the interaction is direct and impairs the interaction of RIGI with MAVS/IPS1. Interacts with VCP/p97; interaction is direct and allows the recruitment of RNF125 and subsequent ubiquitination and degradation. Interacts with NOP53; may regulate RIGI through USP15-mediated 'Lys-63'-linked deubiquitination. Interacts with SIGLEC10, CBL and PTPN11; within a negative feedback loop leading to RIGI degradation. Interacts with LRRC25. Interacts with ZCCHC3; leading to activation of RIGI. Interacts with RNF123. Interacts with UBE2D3 and UBE2N; E2 ubiquitin ligases involved in RNF135-mediated ubiquitination of RIGI and activation of the RIG-I signaling pathway. Interacts with IFIT3. Interacts with DDX3X. Interacts with RTN3. Interacts with ARL16; this interaction is GTP-dependent and induced upon viral infection; this interaction suppresses the RNA sensing activity of RIGI. Interacts with DHX16; this interaction enhances RIGI-mediated antiviral response. Interacts with IRGM; promoting RIGI degradation. Interacts with IFI6; this interaction inhibits RIGI activation. Interacts with ECSIT; this interaction bridges RIGI to the MAVS complex at the mitochondrion. Interacts with YWHAE; this interaction drives RIGI at the mitochondrion. As to quaternary structure, (Microbial infection) Interacts with protein Z of Guanarito virus, Machupo virus, Junin arenavirus and Sabia virus. This interaction disrupts its interaction with MAVS/IPS1, impeding downstream IRF3 and NF-kappa-B activation and resulting in decreased IFN-beta induction. (Microbial infection) Interacts (via CARD domain) with Human respiratory syncytial virus A non-structural protein 2 (NS2) and this interaction disrupts its interaction with MAVS/IPS1, impeding downstream IRF3 activation. In terms of assembly, (Microbial infection) Interacts with Rotavirus A non-structural protein 1 (NSP1) and this interaction induces down-regulation of RIGI. As to quaternary structure, (Microbial infection) Interacts with paramyxoviruses (Sendai virus, Nipah virus, Measles virus and Parainfluenza virus 5) protein V; this interaction inhibits TRIM25-mediated ubiquitination of RIG-I and prevents downstream RIG-I signaling thereby inhibiting the IFN responses. (Microbial infection) Interacts with herpes simplex virus 1 protein US11; this interaction prevents the interaction of MAVS/IPS1 to RIGI. In terms of assembly, (Microbial infection) Interacts with herpes simplex virus 1 protein UL37; this interaction deaminates RIGI and inhibits its activation. As to quaternary structure, (Microbial infection) Interacts with Severe fever with thrombocytopenia virus (SFTSV) NSs; this interaction this interaction sequesters RIGI in NSs-induced cytoplasmic inclusion bodies thereby inhibiting the IFN responses. In terms of processing, phosphorylated in resting cells and dephosphorylated in RNA virus-infected cells. Phosphorylation at Thr-770, Ser-854 and Ser-855 results in inhibition of its activity while dephosphorylation at these sites results in its activation. Ubiquitinated. 'Lys-63' ubiquitination by RNF135, which occurs after RNA-binding and homodimerization, releases the autoinhibition of the CARD domains by the RLR CTR domain, an essential step in the activation of the RIG-I signaling pathway. Lys-172 is the critical site of ubiquitination for MAVS/IPS1 binding and to induce anti-viral signal transduction. Lys-154, Lys-164 and Lys-172 are shared sites for RNF135-mediated and TRIM4-mediated ubiquitination. Also undergoes 'Lys-48' ubiquitination at Lys-181 by RNF125 that leads to proteasomal degradation. 'Lys-48' ubiquitination follows viral infection and is enhanced by 'Lys-63'-linked ubiquitination of the CARD domains that promotes interaction with VCP/p97 and subsequent recruitment of RNF125. Within a negative feedback loop involving SIGLEC10 and PTPN11, 'Lys-48' ubiquitination at Lys-812 by CBL also elicits the proteasomal degradation of RIGI. Deubiquitinated by CYLD, a protease that selectively cleaves 'Lys-63'-linked ubiquitin chains. Also probably deubiquitinated by USP17L2/USP17 that cleaves 'Lys-48'- and 'Lys-63'-linked ubiquitin chains and positively regulates the receptor. Ubiquitinated by TRIM40 via 'Lys-48'-linked ubiquitination; leading to proteasomal degradation. Deubiquitinated by USP27X that cleaves 'Lys-63'-linked ubiquitin chains and inhibits the innate immune receptor activity. Deubiquitinated by USP3 that also cleaves 'Lys-63'-linked ubiquitin chains and inhibits the innate immune receptor activity. Undergoes 'Lys-48'-linked ubiquitination catalyzed by MARCHF5 at Lys-193 and Lys-203, leading to proteasomal degradation. Post-translationally, phosphorylated at Ser-8 and Thr-170; these phosphorylations suppresse the TRIM25-mediated 'Lys-63'-linked ubiquitination of RIG-I and thereby prevents RIG-I downstream signaling. Dephosphorylated by phosphatases PPP1CA/PPP1CC; this step is essential to activate RIGI and initiate downstream signaling. In terms of processing, ISGylated. Conjugated to ubiquitin-like protein ISG15 upon IFN-beta stimulation. ISGylation negatively regulates its function in antiviral signaling response. Sumoylated, probably by MUL1; inhibiting its polyubiquitination. Post-translationally, acetylated in response to RNA virus infection. Deacetylated by HDAC6 in the presence of viral mRNAs which is required for detection of viral RNA by RIGI. In terms of processing, (Microbial infection) Deamidated on Asn-495 and Asn-549 by herpes simplex virus 1 protein UL37. These modifications eliminate RIGI detection of viral RNA and restriction of viral replication. Degraded via selective autophagy following interaction with IRGM. IRGM promotes RIGI recruitment to autophagosome membranes, promoting its SQSTM1/p62-dependent autophagic degradation. Post-translationally, (Microbial infection) Cleaved by the protease 3C of coxsackievirus B3, poliovirus and enterovirus 71 allowing the virus to disrupt the host type I interferon production. In terms of processing, (Microbial infection) Phosphorylated at Ser-8 by herpes simplex virus 1 protein US3 leading to inhibition of critical RIGI activation steps. Present in vascular smooth cells (at protein level).

Its subcellular location is the cytoplasm. It localises to the cell projection. It is found in the ruffle membrane. The protein localises to the cytoskeleton. The protein resides in the cell junction. Its subcellular location is the tight junction. The catalysed reaction is ATP + H2O = ADP + phosphate + H(+). Its function is as follows. Innate immune receptor that senses cytoplasmic viral nucleic acids and activates a downstream signaling cascade leading to the production of type I interferons and pro-inflammatory cytokines. Forms a ribonucleoprotein complex with viral RNAs on which it homooligomerizes to form filaments. The homooligomerization allows the recruitment of RNF135 an E3 ubiquitin-protein ligase that activates and amplifies the RIG-I-mediated antiviral signaling in an RNA length-dependent manner through ubiquitination-dependent and -independent mechanisms. Upon activation, associates with mitochondria antiviral signaling protein (MAVS/IPS1) that activates the IKK-related kinases TBK1 and IKBKE which in turn phosphorylate the interferon regulatory factors IRF3 and IRF7, activating transcription of antiviral immunological genes including the IFN-alpha and IFN-beta interferons. Ligands include 5'-triphosphorylated ssRNAs and dsRNAs but also short dsRNAs (&lt;1 kb in length). In addition to the 5'-triphosphate moiety, blunt-end base pairing at the 5'-end of the RNA is very essential. Overhangs at the non-triphosphorylated end of the dsRNA RNA have no major impact on its activity. A 3'overhang at the 5'triphosphate end decreases and any 5'overhang at the 5' triphosphate end abolishes its activity. Detects both positive and negative strand RNA viruses including members of the families Paramyxoviridae: Human respiratory syncytial virus and measles virus (MeV), Rhabdoviridae: vesicular stomatitis virus (VSV), Orthomyxoviridae: influenza A and B virus, Flaviviridae: Japanese encephalitis virus (JEV), hepatitis C virus (HCV), dengue virus (DENV) and west Nile virus (WNV). It also detects rotaviruses and reoviruses. Detects and binds to SARS-CoV-2 RNAs which is inhibited by m6A RNA modifications. Also involved in antiviral signaling in response to viruses containing a dsDNA genome such as Epstein-Barr virus (EBV). Detects dsRNA produced from non-self dsDNA by RNA polymerase III, such as Epstein-Barr virus-encoded RNAs (EBERs). May play important roles in granulocyte production and differentiation, bacterial phagocytosis and in the regulation of cell migration. This Homo sapiens (Human) protein is Antiviral innate immune response receptor RIG-I.